The chain runs to 329 residues: 1-phosphatidylinositol phosphodiesterase (329 aa).

An N-terminal signal peptide occupies residues 1–31; sequence MSNKKLILKLFICSTIFITFVFALHDKRVVA. A PI-PLC X-box domain is found at 51–194; that stretch reads NIPLARISIP…ARGKIVLLKR (144 aa). Residue histidine 63 is the Proton acceptor of the active site. Histidine 113 acts as the Proton donor in catalysis.

It localises to the secreted. It catalyses the reaction a 1,2-diacyl-sn-glycero-3-phospho-(1D-myo-inositol) = 1D-myo-inositol 1,2-cyclic phosphate + a 1,2-diacyl-sn-glycerol. Its function is as follows. Cleaves glycosylphosphatidylinositol (GPI) and phosphatidylinositol (PI) anchors but not PI phosphates. The polypeptide is 1-phosphatidylinositol phosphodiesterase (Bacillus thuringiensis).